The sequence spans 679 residues: Glycine--tRNA ligase beta subunit (679 aa).

Belongs to the class-II aminoacyl-tRNA synthetase family. In terms of assembly, tetramer of two alpha and two beta subunits.

The protein localises to the cytoplasm. It carries out the reaction tRNA(Gly) + glycine + ATP = glycyl-tRNA(Gly) + AMP + diphosphate. The protein is Glycine--tRNA ligase beta subunit of Streptococcus gordonii (strain Challis / ATCC 35105 / BCRC 15272 / CH1 / DL1 / V288).